Reading from the N-terminus, the 612-residue chain is Cyclin-dependent kinase 8 (612 aa).

Residues 23–345 (FENSKEIGRG…CEEAMNDIYF (323 aa)) enclose the Protein kinase domain. Residues 29-37 (IGRGTYGLV) and Lys-57 each bind ATP. The Proton acceptor role is filled by Asp-155. 5 stretches are compositionally biased toward low complexity: residues 403 to 455 (QQQM…MGQP), 472 to 483 (HQMMQQQHQSQH), 543 to 555 (PQPGPSGYYQQRP), 564 to 573 (QGYMNPQMGM), and 600 to 612 (NPQQQQQWQQYHR). Disordered regions lie at residues 403–483 (QQQM…QSQH) and 543–612 (PQPG…QYHR).

The protein belongs to the protein kinase superfamily. CMGC Ser/Thr protein kinase family. CDC2/CDKX subfamily. In terms of assembly, component of the Mediator complex. Requires Mg(2+) as cofactor.

The protein resides in the nucleus. It carries out the reaction L-seryl-[protein] + ATP = O-phospho-L-seryl-[protein] + ADP + H(+). The enzyme catalyses L-threonyl-[protein] + ATP = O-phospho-L-threonyl-[protein] + ADP + H(+). It catalyses the reaction [DNA-directed RNA polymerase] + ATP = phospho-[DNA-directed RNA polymerase] + ADP + H(+). Its function is as follows. Component of the Mediator complex, a coactivator involved in regulated gene transcription of nearly all RNA polymerase II-dependent genes. Mediator functions as a bridge to convey information from gene-specific regulatory proteins to the basal RNA polymerase II transcription machinery. Mediator is recruited to promoters by direct interactions with regulatory proteins and serves as a scaffold for the assembly of a functional pre-initiation complex with RNA polymerase II and the general transcription factors. Phosphorylates the CTD (C-terminal domain) of the large subunit of RNA polymerase II (RNAp II), which may inhibit the formation of a transcription initiation complex. The polypeptide is Cyclin-dependent kinase 8 (cdk-8) (Caenorhabditis briggsae).